Consider the following 280-residue polypeptide: Shikimate dehydrogenase (NADP(+)) (280 aa).

Shikimate-binding positions include 20–22 and T67; that span reads SLS. The active-site Proton acceptor is the K71. Residues N92 and D107 each coordinate shikimate. Residues 131 to 135 and G220 each bind NADP(+); that span reads GAGGA. Y222 is a shikimate binding site. G243 serves as a coordination point for NADP(+).

Belongs to the shikimate dehydrogenase family. In terms of assembly, homodimer.

It carries out the reaction shikimate + NADP(+) = 3-dehydroshikimate + NADPH + H(+). It participates in metabolic intermediate biosynthesis; chorismate biosynthesis; chorismate from D-erythrose 4-phosphate and phosphoenolpyruvate: step 4/7. In terms of biological role, involved in the biosynthesis of the chorismate, which leads to the biosynthesis of aromatic amino acids. Catalyzes the reversible NADPH linked reduction of 3-dehydroshikimate (DHSA) to yield shikimate (SA). The chain is Shikimate dehydrogenase (NADP(+)) from Maricaulis maris (strain MCS10) (Caulobacter maris).